The primary structure comprises 302 residues: N-acetyl-D-glucosamine kinase (302 aa).

Residues 4-11 (GFDVGGTK) and 133-140 (GFGGGLVY) contribute to the ATP site. Zn(2+)-binding residues include His157, Cys177, Cys179, and Cys184.

It belongs to the ROK (NagC/XylR) family. NagK subfamily.

The catalysed reaction is N-acetyl-D-glucosamine + ATP = N-acetyl-D-glucosamine 6-phosphate + ADP + H(+). The protein operates within cell wall biogenesis; peptidoglycan recycling. Catalyzes the phosphorylation of N-acetyl-D-glucosamine (GlcNAc) derived from cell-wall degradation, yielding GlcNAc-6-P. The protein is N-acetyl-D-glucosamine kinase of Vibrio cholerae serotype O1 (strain ATCC 39315 / El Tor Inaba N16961).